Here is a 226-residue protein sequence, read N- to C-terminus: 7-cyano-7-deazaguanine synthase (226 aa).

Position 10 to 20 (10 to 20) interacts with ATP; it reads LSGGLDSATAA. Zn(2+) contacts are provided by Cys191, Cys199, Cys202, and Cys205.

It belongs to the QueC family. The cofactor is Zn(2+).

It carries out the reaction 7-carboxy-7-deazaguanine + NH4(+) + ATP = 7-cyano-7-deazaguanine + ADP + phosphate + H2O + H(+). Its pathway is purine metabolism; 7-cyano-7-deazaguanine biosynthesis. In terms of biological role, catalyzes the ATP-dependent conversion of 7-carboxy-7-deazaguanine (CDG) to 7-cyano-7-deazaguanine (preQ(0)). This chain is 7-cyano-7-deazaguanine synthase, found in Synechococcus sp. (strain CC9902).